We begin with the raw amino-acid sequence, 402 residues long: 1-deoxy-D-xylulose 5-phosphate reductoisomerase (402 aa).

The NADPH site is built by T13, G14, S15, I16, and N126. K127 lines the 1-deoxy-D-xylulose 5-phosphate pocket. NADPH is bound at residue E128. A Mn(2+)-binding site is contributed by D152. S153, E154, S188, and H211 together coordinate 1-deoxy-D-xylulose 5-phosphate. Residue E154 participates in Mn(2+) binding. Residue G217 coordinates NADPH. 1-deoxy-D-xylulose 5-phosphate-binding residues include S224, N229, K230, and E233. E233 is a binding site for Mn(2+).

Belongs to the DXR family. Mg(2+) is required as a cofactor. It depends on Mn(2+) as a cofactor.

The enzyme catalyses 2-C-methyl-D-erythritol 4-phosphate + NADP(+) = 1-deoxy-D-xylulose 5-phosphate + NADPH + H(+). The protein operates within isoprenoid biosynthesis; isopentenyl diphosphate biosynthesis via DXP pathway; isopentenyl diphosphate from 1-deoxy-D-xylulose 5-phosphate: step 1/6. Its function is as follows. Catalyzes the NADPH-dependent rearrangement and reduction of 1-deoxy-D-xylulose-5-phosphate (DXP) to 2-C-methyl-D-erythritol 4-phosphate (MEP). The protein is 1-deoxy-D-xylulose 5-phosphate reductoisomerase of Psychrobacter cryohalolentis (strain ATCC BAA-1226 / DSM 17306 / VKM B-2378 / K5).